The chain runs to 427 residues: MDDSKTNGRQNASRIVALANTIQKSVAELQAVLDSKGLPAPSFAEDASPDPLPFEAQKAQDAVLDATAELHDILLEPTALVLKTISNEYVAFLGFISRYDIPNFVPLGGRVSFTDIAKKTGFEEGIVKRLLRAAICRRIFQEPESGYVAHTKASKAMRSKILLTFLRTGADMGWYTIFKLVDAAEKWPDVQEQDQTAFNLAHDVQGTYFENVAKSAKNAELFASGMATQWELPGYELHHLLDGYDWTGLGKAKVIDVGGFRGRISIALAERFPDLDLLVQDMEMNEADAHAAVPSALKDRVHFMSRDIFTTQPVRADVYYIRQIFHDWSDKYCTKLLRAHTSQLEAGSSVLIHDCILPEVPGSSLPLWKERDMRAMDLGLVAHMNGRERSVDEWHKLVTEADPRFKIRQISQPEGSMLALIEVVFNA.

The S-adenosyl-L-methionine site is built by W230 and D281. H326 (proton acceptor) is an active-site residue.

The protein belongs to the class I-like SAM-binding methyltransferase superfamily. Cation-independent O-methyltransferase family. COMT subfamily. S-adenosyl-L-methionine serves as cofactor.

The protein operates within mycotoxin biosynthesis. In terms of biological role, O-methyltransferase; part of the 2 gene clusters that mediate the biosynthesis of fusicoccins, diterpene glucosides that display phytohormone-like activity and function as potent activators of plasma membrane H(+)-ATPases in plants by modifying 14-3-3 proteins and cause the plant disease constriction canker. The first step in the pathway is performed by the fusicoccadiene synthase PaFS that possesses both prenyl transferase and terpene cyclase activity, converting isopentenyl diphosphate and dimethylallyl diphosphate into geranylgeranyl diphosphate (GGDP) and successively converting GGDP into fusicocca-2,10(14)-diene, a precursor for fusicoccin H. The second step is the oxidation at the C-8 position by the cytochrome P450 monooxygenase PaP450-2 to yield fusicocca-2,10(14)-diene-8-beta-ol. The cytochrome P450 monooxygenase PaP450-1 then catalyzes the hydroxylation at the C-16 position to produce fusicocca-2,10(14)-diene-8-beta,16-diol. The dioxygenase fc-dox then catalyzes the 16-oxydation of fusicocca-2,10(14)-diene-8-beta,16-diol to yield an aldehyde (8-beta-hydroxyfusicocca-1,10(14)-dien-16-al). The short-chain dehydrogenase/reductase fc-sdr catalyzes the reduction of the aldehyde to yield fusicocca-1,10(14)-diene-8-beta,16-diol. The next step is the hydroxylation at C-9 performed by the cytochrome P450 monooxygenase PaP450-3 that leads to fusicoccin H aglycon which is glycosylated to fusicoccin H by the O-glycosyltransferase PaGT. Hydroxylation at C-12 by the cytochrome P450 monooxygenase PaP450-4 leads then to the production of fusicoccin Q and is followed by methylation by the O-methyltransferase PaMT to yield fusicoccin P. Fusicoccin P is further converted to fusicoccin J via prenylation by the O-glucose prenyltransferase PaPT. Cytochrome P450 monooxygenase PaP450-5 then performs hydroxylation at C-19 to yield dideacetyl-fusicoccin A which is acetylated to 3'-O-deacetyl-fusicoccin A by the O-acetyltransferase PaAT-2. Finally, a another acetylation by the O-acetyltransferase PaAT-1 yields fusicoccin A. The polypeptide is O-methyltransferase PaMT (Phomopsis amygdali (Fusicoccum amygdali)).